The sequence spans 330 residues: Erlin-2-B (330 aa).

Topologically, residues 1 to 2 are cytoplasmic; that stretch reads MS. The helical transmembrane segment at 3 to 23 threads the bilayer; it reads HAGAIAALGVALIAAALFSAI. Topologically, residues 24–330 are lumenal; that stretch reads HKIEEGHVGV…NEPAAAEELK (307 aa). A glycan (N-linked (GlcNAc...) asparagine) is linked at Asn106. A disordered region spans residues 308-330; the sequence is SSSAGPRVQSAKRNEPAAAEELK. Residues 319–330 are compositionally biased toward basic and acidic residues; sequence KRNEPAAAEELK.

Belongs to the band 7/mec-2 family.

It localises to the endoplasmic reticulum membrane. In terms of biological role, mediates the endoplasmic reticulum-associated degradation (ERAD) of inositol 1,4,5-trisphosphate receptors (IP3Rs). Promotes sterol-accelerated ERAD of HMGCR. Involved in regulation of cellular cholesterol homeostasis by regulation the SREBP signaling pathway. The chain is Erlin-2-B (erlin2-b) from Xenopus laevis (African clawed frog).